Here is a 767-residue protein sequence, read N- to C-terminus: Phosphoribosylformylglycinamidine synthase subunit PurL (767 aa).

Histidine 46 is an active-site residue. ATP is bound by residues tyrosine 49 and lysine 88. Glutamate 90 serves as a coordination point for Mg(2+). Substrate is bound by residues 91–94 and arginine 113; that span reads SHNH. The Proton acceptor role is filled by histidine 92. Aspartate 114 lines the Mg(2+) pocket. Position 237 (glutamine 237) interacts with substrate. Mg(2+) is bound at residue aspartate 265. Residue 309–311 participates in substrate binding; that stretch reads ESQ. ATP is bound by residues aspartate 498 and glycine 535. Asparagine 536 provides a ligand contact to Mg(2+). Serine 538 contributes to the substrate binding site.

This sequence belongs to the FGAMS family. As to quaternary structure, monomer. Part of the FGAM synthase complex composed of 1 PurL, 1 PurQ and 2 PurS subunits.

The protein localises to the cytoplasm. The enzyme catalyses N(2)-formyl-N(1)-(5-phospho-beta-D-ribosyl)glycinamide + L-glutamine + ATP + H2O = 2-formamido-N(1)-(5-O-phospho-beta-D-ribosyl)acetamidine + L-glutamate + ADP + phosphate + H(+). Its pathway is purine metabolism; IMP biosynthesis via de novo pathway; 5-amino-1-(5-phospho-D-ribosyl)imidazole from N(2)-formyl-N(1)-(5-phospho-D-ribosyl)glycinamide: step 1/2. In terms of biological role, part of the phosphoribosylformylglycinamidine synthase complex involved in the purines biosynthetic pathway. Catalyzes the ATP-dependent conversion of formylglycinamide ribonucleotide (FGAR) and glutamine to yield formylglycinamidine ribonucleotide (FGAM) and glutamate. The FGAM synthase complex is composed of three subunits. PurQ produces an ammonia molecule by converting glutamine to glutamate. PurL transfers the ammonia molecule to FGAR to form FGAM in an ATP-dependent manner. PurS interacts with PurQ and PurL and is thought to assist in the transfer of the ammonia molecule from PurQ to PurL. The sequence is that of Phosphoribosylformylglycinamidine synthase subunit PurL from Anaeromyxobacter sp. (strain Fw109-5).